A 146-amino-acid chain; its full sequence is Hemoglobin subunit delta (146 aa).

Residues His2–His146 form the Globin domain. Ser50 carries the phosphoserine modification. The heme b site is built by His63 and His92.

The protein belongs to the globin family. In terms of assembly, heterotetramer of two delta chains and two alpha chains. As to expression, red blood cells.

This is Hemoglobin subunit delta (HBD) from Saimiri sciureus (Common squirrel monkey).